Here is a 120-residue protein sequence, read N- to C-terminus: Large ribosomal subunit protein uL14 (120 aa).

This sequence belongs to the universal ribosomal protein uL14 family. Part of the 50S ribosomal subunit. Forms a cluster with proteins L3 and L19. In the 70S ribosome, L14 and L19 interact and together make contacts with the 16S rRNA in bridges B5 and B8.

Its function is as follows. Binds to 23S rRNA. Forms part of two intersubunit bridges in the 70S ribosome. This Dictyoglomus turgidum (strain DSM 6724 / Z-1310) protein is Large ribosomal subunit protein uL14.